The primary structure comprises 676 residues: Polyunsaturated fatty acid lipoxygenase ALOX15B (676 aa).

The PLAT domain maps to 2-124; sequence AEFRVRVSTG…TLVLQEGTAK (123 aa). Ca(2+)-binding residues include G15, G17, D39, N40, G42, E44, D85, and A86. The region spanning 125–676 is the Lipoxygenase domain; it reads VSWADHHPVL…PPLIENSVSI (552 aa). Fe cation is bound by residues H373, H378, H553, and I676.

This sequence belongs to the lipoxygenase family. Requires Fe cation as cofactor. In terms of tissue distribution, expressed in hair, prostate, lung, ovary, lymph node, spinal cord and cornea.

The protein resides in the nucleus. Its subcellular location is the cytoplasm. The protein localises to the cytosol. It is found in the cell membrane. It localises to the cytoskeleton. The protein resides in the membrane. Its subcellular location is the cell junction. The protein localises to the adherens junction. It is found in the focal adhesion. It catalyses the reaction (5Z,8Z,11Z,14Z)-eicosatetraenoate + O2 = (15S)-hydroperoxy-(5Z,8Z,11Z,13E)-eicosatetraenoate. The catalysed reaction is (9Z,12Z)-octadecadienoate + O2 = 13-hydroperoxy-(9Z,11E)-octadecadienoate. It carries out the reaction (5S)-hydroxy-(6E,8Z,11Z,14Z)-eicosatetraenoate + O2 = (5S)-hydroxy-(15S)-hydroperoxy-(6E,8Z,11Z,13E)-eicosatetraenoate. The enzyme catalyses (5Z,8Z,11Z,14Z)-eicosatetraenoate + O2 = 5-hydroperoxy-(6E,8Z,11Z,14Z)-eicosatetraenoate. It catalyses the reaction (5S,6R)-dihydroxy-(7E,9E,11Z,14Z)-eicosatetraenoate + O2 = (5S,6R)-dihydroxy-(15S)-hydroperoxy-(7E,9E,11Z,13E)-eicosatetraenoate. The catalysed reaction is (5S)-hydroperoxy-(6E,8Z,11Z,14Z)-eicosatetraenoate + O2 = (5S,15S)-dihydroperoxy-(6E,8Z,11Z,13E)-eicosatetraenoate. It carries out the reaction 2-(5Z,8Z,11Z,14Z-eicosatetraenoyl)-glycerol + O2 = 2-[15(S)-hydroperoxy-(5Z,8Z,11Z,13E)-eicosatetraenoyl]-glycerol. The enzyme catalyses (8S)-hydroperoxy-(5Z,9E,11Z,14Z)-eicosatetraenoate + O2 = (8S,15S)-dihydroperoxy-(5Z,9E,11Z,13E)-eicosatetraenoate. It catalyses the reaction N-(5Z,8Z,11Z,14Z)-eicosatetraenoyl-L-alanine + O2 = N-(15S)-hydroperoxy-(5Z,8Z,11Z,13E)-eicosatetraenoyl-alanine. The catalysed reaction is N-(5Z,8Z,11Z,14Z)-eicosatetraenoyl-gamma-aminobutanoate + O2 = N-(15S)-hydroperoxy-(5Z,8Z,11Z,13E)-eicosatetraenoyl-gamma-aminobutanoate. It carries out the reaction N-(5Z,8Z,11Z,14Z)-eicosatetraenoyl-glycine + O2 = N-(15S)-hydroperoxy-(5Z,8Z,11Z,13E)-eicosatetraenoyl-glycine. The enzyme catalyses N-(5Z,8Z,11Z,14Z)-eicosatetraenoyl-taurine + O2 = N-(15S)-hydroperoxy-(5Z,8Z,11Z,13E)-eicosatetraenoyl-taurine. It catalyses the reaction 2-(5Z,8Z,11Z,14Z-eicosatetraenoyl)-glycerol + O2 = 2-[12-hydroperoxy-(5Z,8Z,10E,14Z)-eicosatetraenoyl]-glycerol. The catalysed reaction is 1-octadecanoyl-2-(5Z,8Z,11Z,14Z-eicosatetraenoyl)-sn-glycero-3-phosphocholine + O2 = 1-octadecanoyl-2-(15-hydroperoxy-5Z,8Z,11Z,13E-eicosatetraenoyl)-sn-glycero-3-phosphocholine. It carries out the reaction a 1-acyl-2-(5Z,8Z,11Z,14Z-eicosatetraenoyl)-sn-glycero-3-phospho-(1D-myo-inositol) + O2 = a 1-acyl-2-(15-hydroperoxy-5Z,8Z,11Z,13E-eicosatetraenoyl)-sn-glycero-3-phospho-(1D-myo-inositol). The enzyme catalyses a 1-acyl-2-(8Z,11Z,14Z-eicosatrienoyl)-sn-glycero-3-phospho-(1D-myo-inositol) + O2 = a 1-acyl-2-(15-hydroperoxy-8Z,11Z,13E-eicosatrienoyl)-sn-glycero-3-phospho-(1D-myo-inositol). It catalyses the reaction 1-octadecanoyl-2-(5Z,8Z,11Z,14Z)-eicosatetraenoyl-sn-glycero-3-phosphoethanolamine + O2 = 1-octadecanoyl-2-(15-hydroperoxy-5Z,8Z,11Z,13E-eicosatetraenoyl)-sn-glycero-3-phosphoethanolamine. The catalysed reaction is 1-octadecanoyl-2-(5Z,8Z,11Z,14Z-eicosatetraenoyl)-sn-glycero-3-phospho-(1D-myo-inositol) + O2 = 1-octadecanoyl-2-(15-hydroperoxy-5Z,8Z,11Z,13E-eicosatetraenoyl)-sn-glycero-3-phospho-(1D-myo-inositol). It carries out the reaction (8Z,11Z,14Z)-eicosatrienoate + O2 = 15-hydroperoxy-(8Z,11Z,13E)-eicosatrienoate. The enzyme catalyses (7S)-hydroperoxy-(4Z,8E,10Z,13Z,16Z,19Z)-docosahexaenoate + O2 = (7S,17S)-dihydroperoxy-(4Z,8E,10Z,13Z,15E,19Z)-docosahexaenoate. It catalyses the reaction (5Z,8Z,11Z,14Z)-eicosatetraenoate + O2 = 15-hydroperoxy-(5Z,8Z,11Z,13E)-eicosatetraenoate. It functions in the pathway lipid metabolism; hydroperoxy eicosatetraenoic acid biosynthesis. In terms of biological role, non-heme iron-containing dioxygenase that catalyzes the stereo-specific peroxidation of free and esterified polyunsaturated fatty acids (PUFAs) generating a spectrum of bioactive lipid mediators. It inserts peroxyl groups at C15 of arachidonate ((5Z,8Z,11Z,14Z)-eicosatetraenoate) producing (15S)-hydroperoxyeicosatetraenoate/(15S)-HPETE. Also peroxidizes linoleate ((9Z,12Z)-octadecadienoate) to 13-hydroperoxyoctadecadienoate/13-HPODE. Oxygenates arachidonyl derivatives such as 2-arachidonoylglycerol (2-AG) leading to the production and extracellular release of 15-hydroxyeicosatetraenoyl glycerol (15-HETE-G) that acts as a peroxisome proliferator-activated receptor alpha agonist. Has the ability to efficiently class-switch ALOX5 pro-inflammatory mediators into anti-inflammatory intermediates. Participates in the sequential oxidations of DHA ((4Z,7Z,10Z,13Z,16Z,19Z)-docosahexaenoate) to generate specialized pro-resolving mediators (SPMs) resolvin D5 ((7S,17S)-diHPDHA), which can actively down-regulate the immune response and have anti-aggregation properties with platelets. In addition to free PUFAs hydrolyzed from phospholipids, it directly oxidizes PUFAs esterified to membrane-bound phospholipids. Has no detectable 8S-lipoxygenase activity on arachidonate but reacts with (8S)-HPETE to produce (8S,15S)-diHPETE. May regulate progression through the cell cycle and cell proliferation. May also regulate cytokine secretion by macrophages and therefore play a role in the immune response. May also regulate macrophage differentiation into proatherogenic foam cells. Functionally, does not convert arachidonic acid to 15S-hydroperoxyeicosatetraenoic acid/(15S)-HPETE. In Homo sapiens (Human), this protein is Polyunsaturated fatty acid lipoxygenase ALOX15B.